The primary structure comprises 1322 residues: C-Jun-amino-terminal kinase-interacting protein 3 (1322 aa).

The RH1 domain occupies 12 to 100; it reads VVVYQDDYCS…LTQYEREKAL (89 aa). The kinesin-binding domain (KBD); essential for its function in axon elongation stretch occupies residues 50–80; it reads EVVKELMPLVVNVLENLDSVLSENQEHEVEL. Positions 66-167 form a coiled coil; sequence LDSVLSENQE…KKEYNALHQR (102 aa). Disordered regions lie at residues 183-211 and 245-317; these read KMQQVGGGGQTESSLPGRSRKERPTSLNV and SSSY…NSRN. Residues 210-226 form a JNK-binding domain (JBD); essential for its function in axon elongation region; sequence NVFPLADGMVRAQMGGK. A compositionally biased stretch (low complexity) spans 261–270; it reads SSAAATPSTT. Phosphothreonine is present on residues threonine 266, threonine 276, and threonine 287. Residues 271 to 282 are compositionally biased toward polar residues; that stretch reads GTKSNTPTSSVP. Residues 305 to 315 are compositionally biased toward basic residues; it reads NNKRAREKRNS. Residues serine 315, serine 365, and serine 366 each carry the phosphoserine modification. Positions 424–459 are leucine zipper-like domain (LZ); essential for its function in axon elongation; the sequence is QLLETKNALNVVKNDLIAKVDQLSGEQEVLKGELEA. Residues 443–534 adopt a coiled-coil conformation; it reads VDQLSGEQEV…KERLMELQEA (92 aa). Positions 459–515 are interaction with NTRK2; that stretch reads AAKQAKVKLENRIKELEEELKRVKSEAVTARREPREEVEDDKIPMAQRRRFTRVEMA. Residues 506 to 580 enclose the RH2 domain; sequence RRRFTRVEMA…SPPPAKRSYP (75 aa). Phosphoserine occurs at positions 588 and 662. 3 disordered regions span residues 704–754, 844–952, and 1281–1307; these read WKPN…EADA, PRSN…TTSS, and RIGDGEDDETEEGTGDVNQTKPSLSKA. The segment covering 724–750 has biased composition (basic and acidic residues); that stretch reads LTCDREGEGEPKSTHPSPEKKKAKEVP. Over residues 914–937 the composition is skewed to polar residues; the sequence is APTQSSSTQPASENGSESDGSIVQ. The segment covering 941–952 has biased composition (low complexity); it reads EPSGESSATTSS. A compositionally biased stretch (acidic residues) spans 1285-1294; it reads GEDDETEEGT.

Belongs to the JIP scaffold family. As to quaternary structure, forms homo- or heterooligomeric complexes. The central region of MAPK8IP3 interacts with the C-terminal of MAPK8IP2 but not MAPK8IP1. Binds specific components of the JNK signaling pathway namely MAPK8/JNK1, MAPK9/JNK2 and MAPK10/JNK3 to the N-terminal region, MAP2K4/MKK4 and MAP2K7/MKK7 to the central region and MAP3K11 to the C-terminal region. Binds the TPR motif-containing C-terminal of kinesin light chain, KLC1. Pre-assembled MAPK8IP1 scaffolding complexes are then transported as a cargo of kinesin, to the required subcellular location. Interacts with ROCK1 and this interaction is enhanced by ultraviolet-B (UVB) radiation. Interacts with SH3RF2. Interacts with NTRK3/TRKC. Interacts with NTRK2/TRKB. In terms of processing, phosphorylation by ROCK1 is crucial for the recruitment of JNK.

The protein localises to the cytoplasm. The protein resides in the golgi apparatus. It localises to the cytoplasmic vesicle. It is found in the cell projection. Its subcellular location is the growth cone. The protein localises to the axon. The protein resides in the dendrite. It localises to the perinuclear region. Functionally, the JNK-interacting protein (JIP) group of scaffold proteins selectively mediates JNK signaling by aggregating specific components of the MAPK cascade to form a functional JNK signaling module. May function as a regulator of vesicle transport, through interactions with the JNK-signaling components and motor proteins. Promotes neuronal axon elongation in a kinesin- and JNK-dependent manner. Activates cofilin at axon tips via local activation of JNK, thereby regulating filopodial dynamics and enhancing axon elongation. Its binding to kinesin heavy chains (KHC), promotes kinesin-1 motility along microtubules and is essential for axon elongation and regeneration. Regulates cortical neuronal migration by mediating NTRK2/TRKB anterograde axonal transport during brain development. Acts as an adapter that bridges the interaction between NTRK2/TRKB and KLC1 and drives NTRK2/TRKB axonal but not dendritic anterograde transport, which is essential for subsequent BDNF-triggered signaling and filopodia formation. The protein is C-Jun-amino-terminal kinase-interacting protein 3 (Mapk8ip3) of Rattus norvegicus (Rat).